Consider the following 390-residue polypeptide: Protein YghO (390 aa).

This is Protein YghO (yghO) from Escherichia coli (strain K12).